The chain runs to 705 residues: Protein arginine N-methyltransferase 7 (705 aa).

SAM-dependent MTase PRMT-type domains are found at residues 29–372 and 381–705; these read QNSW…YSLW and TKSV…QKKL.

This sequence belongs to the class I-like SAM-binding methyltransferase superfamily. Protein arginine N-methyltransferase family. PRMT7 subfamily.

Its function is as follows. Essential arginine methyltransferase that can both catalyze the formation of omega-N monomethylarginine (MMA) and symmetrical dimethylarginine (sDMA). Specifically mediates the symmetrical dimethylation of arginine residues in the small nuclear ribonucleoproteins SmD1 and SmD3. The chain is Protein arginine N-methyltransferase 7 (Art7) from Drosophila simulans (Fruit fly).